Reading from the N-terminus, the 154-residue chain is Transcriptional repressor NrdR (154 aa).

Residues cysteine 3–cysteine 34 fold into a zinc finger. In terms of domain architecture, ATP-cone spans proline 49–glutamate 139.

This sequence belongs to the NrdR family. Requires Zn(2+) as cofactor.

In terms of biological role, negatively regulates transcription of bacterial ribonucleotide reductase nrd genes and operons by binding to NrdR-boxes. The protein is Transcriptional repressor NrdR of Pseudomonas aeruginosa (strain LESB58).